The following is a 159-amino-acid chain: Ribosomal RNA large subunit methyltransferase H (159 aa).

S-adenosyl-L-methionine contacts are provided by residues leucine 76, glycine 108, and 127 to 132; that span reads FGQLTL.

This sequence belongs to the RNA methyltransferase RlmH family. In terms of assembly, homodimer.

It is found in the cytoplasm. The catalysed reaction is pseudouridine(1915) in 23S rRNA + S-adenosyl-L-methionine = N(3)-methylpseudouridine(1915) in 23S rRNA + S-adenosyl-L-homocysteine + H(+). In terms of biological role, specifically methylates the pseudouridine at position 1915 (m3Psi1915) in 23S rRNA. In Streptococcus gordonii (strain Challis / ATCC 35105 / BCRC 15272 / CH1 / DL1 / V288), this protein is Ribosomal RNA large subunit methyltransferase H.